Here is a 174-residue protein sequence, read N- to C-terminus: Ferritin, heavy subunit (174 aa).

A Ferritin-like diiron domain is found at 7–156 (QNFHKDCEAA…DWVTNLRRLG (150 aa)). The Fe cation site is built by Glu24, Glu59, His62, Glu104, and Gln138.

It belongs to the ferritin family. As to quaternary structure, in liver, forms a heteromer consisting of middle and heavy subunits. The functional molecule forms a roughly spherical shell with a diameter of 12 nm and contains a central cavity into which the insoluble mineral iron core is deposited. In terms of tissue distribution, liver (at protein level).

The catalysed reaction is 4 Fe(2+) + O2 + 4 H(+) = 4 Fe(3+) + 2 H2O. Functionally, stores iron in a soluble, non-toxic, readily available form. Important for iron homeostasis. Has ferroxidase activity. Iron is taken up in the ferrous form and deposited as ferric hydroxides after oxidation. Also plays a role in delivery of iron to cells. Mediates iron uptake in capsule cells of the developing kidney. Delivery to lysosomes is mediated by the cargo receptor NCOA4 for autophagic degradation and release of iron. This chain is Ferritin, heavy subunit, found in Trematomus newnesi (Dusky notothen).